The primary structure comprises 390 residues: 8-amino-7-oxononanoate synthase (390 aa).

Position 22 (arginine 22) interacts with substrate. Pyridoxal 5'-phosphate is bound at residue 109–110 (GY). Position 134 (histidine 134) interacts with substrate. Positions 180, 208, and 236 each coordinate pyridoxal 5'-phosphate. Lysine 239 carries the N6-(pyridoxal phosphate)lysine modification. Threonine 353 contributes to the substrate binding site.

The protein belongs to the class-II pyridoxal-phosphate-dependent aminotransferase family. BioF subfamily. Homodimer. Pyridoxal 5'-phosphate is required as a cofactor.

It carries out the reaction 6-carboxyhexanoyl-[ACP] + L-alanine + H(+) = (8S)-8-amino-7-oxononanoate + holo-[ACP] + CO2. Its pathway is cofactor biosynthesis; biotin biosynthesis. Catalyzes the decarboxylative condensation of pimeloyl-[acyl-carrier protein] and L-alanine to produce 8-amino-7-oxononanoate (AON), [acyl-carrier protein], and carbon dioxide. The protein is 8-amino-7-oxononanoate synthase of Azoarcus sp. (strain BH72).